The chain runs to 218 residues: Cytochrome b6 (218 aa).

The helical transmembrane segment at 35-55 (IFYCLGGITLVCFLIQFATGF) threads the bilayer. Cysteine 38 serves as a coordination point for heme c. Residues histidine 89 and histidine 103 each contribute to the heme b site. Helical transmembrane passes span 93–113 (ASMMVLMLILHVFRVYLTGGF), 119–139 (LTWVTGVVMAVITVAFGVTGY), and 189–209 (LHTFVLPWSLAVFMLMHFLMI). Residues histidine 190 and histidine 205 each coordinate heme b.

It belongs to the cytochrome b family. PetB subfamily. The 4 large subunits of the cytochrome b6-f complex are cytochrome b6, subunit IV (17 kDa polypeptide, PetD), cytochrome f and the Rieske protein, while the 4 small subunits are PetG, PetL, PetM and PetN. The complex functions as a dimer. It depends on heme b as a cofactor. Requires heme c as cofactor.

The protein localises to the cellular thylakoid membrane. In terms of biological role, component of the cytochrome b6-f complex, which mediates electron transfer between photosystem II (PSII) and photosystem I (PSI), cyclic electron flow around PSI, and state transitions. This chain is Cytochrome b6, found in Prochlorococcus marinus (strain MIT 9301).